The primary structure comprises 155 residues: Small ribosomal subunit protein uS7c (155 aa).

It belongs to the universal ribosomal protein uS7 family. Part of the 30S ribosomal subunit.

It is found in the plastid. The protein localises to the chloroplast. Its function is as follows. One of the primary rRNA binding proteins, it binds directly to 16S rRNA where it nucleates assembly of the head domain of the 30S subunit. This is Small ribosomal subunit protein uS7c (rps7) from Houttuynia cordata (Chameleon plant).